We begin with the raw amino-acid sequence, 199 residues long: Recombination protein RecR (199 aa).

The C4-type zinc-finger motif lies at 57–72; it reads CQKCRTFTEQSLCPIC. Positions 81–176 constitute a Toprim domain; it reads DTLCVVETPA…AVSRIAHGVP (96 aa).

The protein belongs to the RecR family.

May play a role in DNA repair. It seems to be involved in an RecBC-independent recombinational process of DNA repair. It may act with RecF and RecO. This Shewanella amazonensis (strain ATCC BAA-1098 / SB2B) protein is Recombination protein RecR.